Reading from the N-terminus, the 800-residue chain is Nuclear poly(A) polymerase 2 (800 aa).

ATP contacts are provided by residues 103-105 (FGS), 115-118 (ADID), aspartate 171, lysine 232, tyrosine 241, and 250-251 (GV). The Mg(2+) site is built by aspartate 116, aspartate 118, and aspartate 171. Short sequence motifs (nuclear localization signal) lie at residues 487–494 (RRRQLPSF) and 533–540 (KRKNDDEI). The interval 497-576 (PNGYKRSRQS…SGITTSGTPQ (80 aa)) is disordered. The span at 527 to 538 (SVERYAKRKNDD) shows a compositional bias: basic and acidic residues. Residues 564–575 (PDSSGITTSGTP) are compositionally biased toward polar residues.

The protein belongs to the poly(A) polymerase family. Monomer. Forms a complex with cleavage and polyadenylation specificity factor (CPSF) subunits CPSF100, CPSF30, FIPS5 and PABN2. Mg(2+) is required as a cofactor. The cofactor is Mn(2+). Mostly expressed in flowers (highly in the style, receptacle and pedicel, but weakly in the vasculature of sepals) and hypocotyls, and, to a lower extent, in roots and stems. Barely detected in leaves (petioles and vascular system).

The protein localises to the nucleus. It localises to the cytoplasm. It carries out the reaction RNA(n) + ATP = RNA(n)-3'-adenine ribonucleotide + diphosphate. Essential protein. Polymerase that creates the 3'-poly(A) tail of mRNA's. Also required for the endoribonucleolytic cleavage reaction at some polyadenylation sites. May acquire specificity through interaction with a cleavage and polyadenylation specificity factor (CPSF) at its C-terminus. Mediates the polyadenylation of RNAs that are associated with polynucleotide phosphorylase (e.g. PNP1). The polypeptide is Nuclear poly(A) polymerase 2 (Arabidopsis thaliana (Mouse-ear cress)).